A 785-amino-acid chain; its full sequence is Adhesion G-protein coupled receptor G7 (785 aa).

The signal sequence occupies residues 1 to 26 (MRSCRSCNVRVLVAIVCGLLTGIVLG). The Extracellular portion of the chain corresponds to 27–435 (LGIWRMVIRI…KYPKSLDILS (409 aa)). N-linked (GlcNAc...) asparagine glycosylation is found at Asn-82, Asn-122, Asn-133, Asn-152, Asn-159, Asn-178, Asn-195, Asn-239, Asn-289, Asn-348, Asn-400, and Asn-408. In terms of domain architecture, GAIN-B spans 271–425 (FSVQKGSSNS…AVLMSFKKDY (155 aa)). 2 disulfides stabilise this stretch: Cys-380/Cys-407 and Cys-395/Cys-409. Residues 380-425 (CVYWNFLINDWDTQGCQKTGNTTEFLRCNCSHTTNFAVLMSFKKDY) form a GPS region. Residues 436-456 (NIGCALSIAGLALTILFQILT) traverse the membrane as a helical segment. At 457–465 (RKIRKTSVT) the chain is on the cytoplasmic side. The helical transmembrane segment at 466 to 486 (WVLVSLCSSMLIFNLLFVFGI) threads the bilayer. At 487-523 (ENSNKNLKTSDSDINVKPENNKIPESDTIETPNPSCT) the chain is on the extracellular side. A helical transmembrane segment spans residues 524 to 544 (AIAALLHYFLLVTFTWNGLSA). The Cytoplasmic portion of the chain corresponds to 545 to 561 (TQLYFLLIRTMKPLPRH). Residues 562–582 (FIIFISLVGWGVPAIIVGVTI) traverse the membrane as a helical segment. Residues 583–623 (GSIYALSGNKRYWELDYRQEEICWLAVPKDNDYARSPLLWS) are Extracellular-facing. A helical membrane pass occupies residues 624-644 (FIIPVTIILITNITIFVIITV). At 645–668 (KVLWKNNQNLTSTKKVSSLKKVFS) the chain is on the cytoplasmic side. The helical transmembrane segment at 669–689 (TLSIAVVFGVTWILAYAMLIS) threads the bilayer. Residues 690–694 (NDDIR) lie on the Extracellular side of the membrane. The chain crosses the membrane as a helical span at residues 695-715 (IVFSYIFCLFNTTQGLQIFIL). Topologically, residues 716–785 (YTVRTKVFQS…SGMTEETSLS (70 aa)) are cytoplasmic.

This sequence belongs to the G-protein coupled receptor 2 family. Adhesion G-protein coupled receptor (ADGR) subfamily. Selectively expressed in the intestinal tissues.

The protein localises to the membrane. Functionally, orphan receptor. In Mus musculus (Mouse), this protein is Adhesion G-protein coupled receptor G7 (Adgrg7).